The following is a 362-amino-acid chain: MGIRSTSVSDAVAALDERSREIFRRIVEGYLESGEPLGSRNLSRILPMSLSPASVRNVMSDLEELGLIYSPHVSAGRLPTQIGLRFFVDAFMQVGDLSAEERASIDRQVRVESGGNPVESMMNEASRMLSGISRGAGLVITSKSDPVLKHVEFIRLEPTKALAVLVGDHDQVENRIIELPAGVTSSQLTEAANFLNAHMSGQTLPELRKQLSRLKDDVRHELDALSRDLVERGIAVWAGSPDEGKPTQLIIRGRANLLEGLAGAEDLDRLRLLFDDLEKKDSLIEILNLAESGSGVRIFIGSENKLFSLSGSSLIVAPYRDDDDRIVGAVGVIGPTRLNYSRIVPMVDYTAQLVSRLSRSQL.

It belongs to the HrcA family.

Negative regulator of class I heat shock genes (grpE-dnaK-dnaJ and groELS operons). Prevents heat-shock induction of these operons. The chain is Heat-inducible transcription repressor HrcA from Rhizobium johnstonii (strain DSM 114642 / LMG 32736 / 3841) (Rhizobium leguminosarum bv. viciae).